The sequence spans 236 residues: Biosynthetic peptidoglycan transglycosylase (236 aa).

A helical membrane pass occupies residues 12-31 (ALLWFAAGSALVVLVLRWVP).

It belongs to the glycosyltransferase 51 family.

The protein resides in the cell inner membrane. The catalysed reaction is [GlcNAc-(1-&gt;4)-Mur2Ac(oyl-L-Ala-gamma-D-Glu-L-Lys-D-Ala-D-Ala)](n)-di-trans,octa-cis-undecaprenyl diphosphate + beta-D-GlcNAc-(1-&gt;4)-Mur2Ac(oyl-L-Ala-gamma-D-Glu-L-Lys-D-Ala-D-Ala)-di-trans,octa-cis-undecaprenyl diphosphate = [GlcNAc-(1-&gt;4)-Mur2Ac(oyl-L-Ala-gamma-D-Glu-L-Lys-D-Ala-D-Ala)](n+1)-di-trans,octa-cis-undecaprenyl diphosphate + di-trans,octa-cis-undecaprenyl diphosphate + H(+). The protein operates within cell wall biogenesis; peptidoglycan biosynthesis. Its function is as follows. Peptidoglycan polymerase that catalyzes glycan chain elongation from lipid-linked precursors. The protein is Biosynthetic peptidoglycan transglycosylase of Pseudomonas syringae pv. tomato (strain ATCC BAA-871 / DC3000).